The sequence spans 257 residues: MTEILPIPAFNDNYIWSIQSDQGDAWVVDPGDAQPVLRHLAENHLTLRGILITHHHHDHTGGVNELLANHPVPVYGFMRSAIKAITVPLQEGDRVDLGDFSLEVLETPGHTLDHISYFGDIAGAPRLFCGDTLFSAGCGRLFEGDPAMMRQSLDKLKRLPGDTYIYCAHEYTLSNLRFAQAVMPESDEVNKRKLQCESLRARGVPTLPAVLGEEIAYNPFLMAEHPVVRRMAQEVSGSPCATATDTFAAIRAWKDRF.

The Zn(2+) site is built by His-54, His-56, Asp-58, His-59, His-110, Asp-131, and His-169.

The protein belongs to the metallo-beta-lactamase superfamily. Glyoxalase II family. In terms of assembly, monomer. It depends on Zn(2+) as a cofactor.

The enzyme catalyses an S-(2-hydroxyacyl)glutathione + H2O = a 2-hydroxy carboxylate + glutathione + H(+). It participates in secondary metabolite metabolism; methylglyoxal degradation; (R)-lactate from methylglyoxal: step 2/2. Thiolesterase that catalyzes the hydrolysis of S-D-lactoyl-glutathione to form glutathione and D-lactic acid. This Hahella chejuensis (strain KCTC 2396) protein is Hydroxyacylglutathione hydrolase.